Here is a 277-residue protein sequence, read N- to C-terminus: MNFFLSSRWSVRLALIIIALLALIALTSQWWLPYDPQAIDLPSRLLSPDAQHWLGTDHLGRDIFSRLMAATRVSLGSVMACLLLVLTLGLVIGGSAGLIGGRVDQATMRVADMFMTFPTSILSFFMVGVLGTGLTNVIIAIALSHWAWYARMVRSLVISLRQREFVLASRLSGAGHVRVFVDHLAGAVIPSLLVLATLDIGHMMLHVAGMSFLGLGVTAPTAEWGVMINDARQYIWTQPLQMFWPGLALFISVMAFNLVGDALRDHLDPHLVTEHAH.

The Cytoplasmic segment spans residues 1–12 (MNFFLSSRWSVR). A helical membrane pass occupies residues 13 to 33 (LALIIIALLALIALTSQWWLP). Over 34-78 (YDPQAIDLPSRLLSPDAQHWLGTDHLGRDIFSRLMAATRVSLGSV) the chain is Periplasmic. The ABC transmembrane type-1 domain maps to 67–260 (LMAATRVSLG…ISVMAFNLVG (194 aa)). A helical membrane pass occupies residues 79 to 99 (MACLLLVLTLGLVIGGSAGLI). Over 100–120 (GGRVDQATMRVADMFMTFPTS) the chain is Cytoplasmic. The helical transmembrane segment at 121-141 (ILSFFMVGVLGTGLTNVIIAI) threads the bilayer. Topologically, residues 142-183 (ALSHWAWYARMVRSLVISLRQREFVLASRLSGAGHVRVFVDH) are periplasmic. A helical transmembrane segment spans residues 184–204 (LAGAVIPSLLVLATLDIGHMM). The Cytoplasmic segment spans residues 205–207 (LHV). The chain crosses the membrane as a helical span at residues 208-228 (AGMSFLGLGVTAPTAEWGVMI). Residues 229–239 (NDARQYIWTQP) lie on the Periplasmic side of the membrane. Residues 240–260 (LQMFWPGLALFISVMAFNLVG) form a helical membrane-spanning segment. The Cytoplasmic segment spans residues 261–277 (DALRDHLDPHLVTEHAH).

This sequence belongs to the binding-protein-dependent transport system permease family. OppBC subfamily. As to quaternary structure, probably forms a heterodimeric pore with NikB.

It is found in the cell inner membrane. Functionally, involved in a nickel transport system, probably translocates nickel through the bacterial inner membrane. This is Nickel transport system permease protein NikC (nikC) from Escherichia coli O157:H7.